The sequence spans 258 residues: Granzyme K (258 aa).

A signal peptide spans 1–23 (MSFSSSALVFLVAGIYMSSESFH). The propeptide at 24–25 (TE) is activation peptide. The 228-residue stretch at 26–253 (IIGGREVQPH…YQTWIKSKLA (228 aa)) folds into the Peptidase S1 domain. The cysteines at positions 51 and 67 are disulfide-linked. Catalysis depends on charge relay system residues histidine 66 and aspartate 110. Intrachain disulfides connect cysteine 143–cysteine 214, cysteine 175–cysteine 193, and cysteine 204–cysteine 228. Serine 208 (charge relay system) is an active-site residue.

The protein belongs to the peptidase S1 family. Granzyme subfamily. In terms of tissue distribution, speen, lungs and liver non-parenchymal cells.

The protein resides in the cytoplasmic granule. In Rattus norvegicus (Rat), this protein is Granzyme K (Gzmk).